Consider the following 127-residue polypeptide: Aspartate 1-decarboxylase (127 aa).

Serine 25 functions as the Schiff-base intermediate with substrate; via pyruvic acid in the catalytic mechanism. Serine 25 is modified (pyruvic acid (Ser)). Substrate is bound at residue threonine 57. Catalysis depends on tyrosine 58, which acts as the Proton donor. A substrate-binding site is contributed by 73–75 (GAA).

It belongs to the PanD family. As to quaternary structure, heterooctamer of four alpha and four beta subunits. Pyruvate is required as a cofactor. In terms of processing, is synthesized initially as an inactive proenzyme, which is activated by self-cleavage at a specific serine bond to produce a beta-subunit with a hydroxyl group at its C-terminus and an alpha-subunit with a pyruvoyl group at its N-terminus.

It localises to the cytoplasm. It carries out the reaction L-aspartate + H(+) = beta-alanine + CO2. The protein operates within cofactor biosynthesis; (R)-pantothenate biosynthesis; beta-alanine from L-aspartate: step 1/1. Functionally, catalyzes the pyruvoyl-dependent decarboxylation of aspartate to produce beta-alanine. The protein is Aspartate 1-decarboxylase of Listeria monocytogenes serotype 4b (strain F2365).